The primary structure comprises 277 residues: MAVYATGDLQGCLEPLKCLLDRVAFEPGRDRLWLTGDLVNRGPQSLETLRFIHGMRDSVTTVLGNHDLHLLAVAHDIERLKKSDTLREILEAPDRDLLLDWLRWQKLLHHDGERGIVLVHAGIPPQWSLKKALRLAAEVEEALRDDSRLPQFLDGMYGNDPLRWNGRLRGTARLRAITNYFTRMRFCTADGTLDLKSKEGLGSAPSGFTPWFSHPRRKTRGQKILFGHWAALEGHCDEPGVIALDTGCVWGGALTLLNLDTGEYHRCACDGAKGDAG.

Belongs to the Ap4A hydrolase family.

It catalyses the reaction P(1),P(4)-bis(5'-adenosyl) tetraphosphate + H2O = 2 ADP + 2 H(+). Hydrolyzes diadenosine 5',5'''-P1,P4-tetraphosphate to yield ADP. This Azotobacter vinelandii (strain DJ / ATCC BAA-1303) protein is Bis(5'-nucleosyl)-tetraphosphatase, symmetrical.